The chain runs to 652 residues: Complement component C1q receptor (652 aa).

An N-terminal signal peptide occupies residues 1 to 21 (MATSMGLLLLLLLLLTQPGAG). Residues 24-580 (ADTEAVVCVG…QNNDGTDGQK (557 aa)) are Extracellular-facing. The region spanning 32–174 (VGTACYTAHS…CGSPGSPGSN (143 aa)) is the C-type lectin domain. 16 disulfide bridges follow: C141-C165, C264-C275, C271-C285, C287-C300, C306-C317, C311-C328, C330-C343, C349-C358, C354-C367, C369-C383, C389-C400, C396-C409, C411-C425, C431-C443, C439-C452, and C454-C467. EGF-like domains are found at residues 260 to 301 (PKYG…VTCA) and 302 to 344 (SRNP…LDCV). An N-linked (GlcNAc...) asparagine glycan is attached at N325. One can recognise an EGF-like 3; calcium-binding domain in the interval 345–384 (DVDECQDSPCAQECVNTPGGFRCECWVGYEPGGPGEGACQ). Residues 385–426 (DVDECALGRSPCAQGCTNTDGSFHCSCEEGYVLAGEDGTQCQ) form the EGF-like 4; calcium-binding domain. The EGF-like 5; calcium-binding domain occupies 427-468 (DVDECVGPGGPLCDSLCFNTQGSFHCGCLPGWVLAPNGVSCT). Disordered regions lie at residues 472-546 (VSLG…VWRE) and 553-572 (TAAS…ATQN). The segment covering 512 to 526 (ATPTTSRPSLSSDAP) has biased composition (polar residues). A helical transmembrane segment spans residues 581-601 (LLLFYILGTVVAILLLLALAL). Residues 602–652 (GLLVYRKRRAKREEKKEKKPQNAADSYSWVPERAESRAMENQYSPTPGTDC) are Cytoplasmic-facing. The interval 611–652 (AKREEKKEKKPQNAADSYSWVPERAESRAMENQYSPTPGTDC) is disordered. Positions 612 to 621 (KREEKKEKKP) are enriched in basic and acidic residues. At S627 the chain carries Phosphoserine. 2 positions are modified to phosphotyrosine: Y628 and Y644. Polar residues predominate over residues 640–652 (MENQYSPTPGTDC).

As to quaternary structure, homodimer. Interacts with C1QBP; the association may represent a cell surface C1q receptor. Interacts with surfactant protein A/SFTPA1. Interacts with multimerin-2/MMRN2. Interacts with DAG1; this interaction plays an important role in endothelial cell migration. Interacts with CBL. Interacts with IGFBP7. Interacts with VEGFR2. In terms of assembly, (Microbial infection) Interacts with hepatitis virus C/HCV core protein. N- and O-glycosylated. Post-translationally, phosphorylated on Tyr-628 and Tyr-644 by SRC; these phosphorylations promote endothelial cell adhesion and migration. In terms of tissue distribution, highly expressed in endothelial cells, platelets, cells of myeloid origin, such as monocytes and neutrophils. Not expressed in cells of lymphoid origin.

Its subcellular location is the cell membrane. Cell surface receptor that plays a role in various physiological processes including inflammation, phagocytosis, and cell adhesion. Plays a role in phagocytosis and enhances the uptake of apoptotic cells and immune complexes by acting as a receptor for defense collagens including surfactant protein A/SFTPA1, C1q, and mannose-binding lectin (MBL2). Plays a role in the regulation of endothelial cell function and adhesion by activating angiogenesis. Mechanistically, exerts its angiogenic function by associating with beta-dystroglycan, leading to SRC-dependent phosphorylation and subsequent recruitment of CBL. In turn, CBL provides a docking site for downstream signaling components, such as CRKL to enhance cell migration. Participates in angiogenesis also by acting as a receptor for the ECM pan-endothelial glycoprotein multimerin-2/MMRN2 and IGFBP7 ligands. Both ligands play a non-redundant role in CD93-mediated endothelial cell function. Acts as a key regulator of endothelial barrier function through modulating VEGFR2 function. The sequence is that of Complement component C1q receptor (CD93) from Homo sapiens (Human).